An 80-amino-acid chain; its full sequence is Penaeidin-3 (80 aa).

A signal peptide spans 1-19; sequence MRLVVCLVYLVSFALVCQG. A Pyrrolidone carboxylic acid modification is found at Q20. 3 disulfides stabilise this stretch: C54–C67, C57–C74, and C68–C75.

This sequence belongs to the penaeidin family. Post-translationally, the N-terminus forms pyrrolidone carboxylic acid. In terms of tissue distribution, strongly expressed in hemocytes, and to a lesser extent in heart, muscle, gills, intestine and eyestalk. Lowest expression in hepatopancreas.

The protein resides in the cytoplasmic granule. Antibacterial and antifungal activity. Presents chitin-binding activity. In Penaeus indicus (Indian white prawn), this protein is Penaeidin-3.